A 370-amino-acid chain; its full sequence is Phosphate-binding protein PstS 3 (370 aa).

Positions 1–22 (MKLNRFGAAVGVLAAGALVLSA) are cleaved as a signal peptide. The N-palmitoyl cysteine moiety is linked to residue Cys23. The S-diacylglycerol cysteine moiety is linked to residue Cys23. Phosphate-binding positions include 56–58 (STA), Ser86, Asp104, and 191–193 (SGT).

The protein belongs to the PstS family. In terms of assembly, the complex is composed of two ATP-binding proteins (PstB), two transmembrane proteins (PstC and PstA) and a solute-binding protein (PstS).

Its subcellular location is the cell membrane. Functionally, part of the ABC transporter complex PstSACB involved in phosphate import. This Mycobacterium bovis (strain ATCC BAA-935 / AF2122/97) protein is Phosphate-binding protein PstS 3 (pstS3).